A 426-amino-acid polypeptide reads, in one-letter code: UDP-N-acetylglucosamine 1-carboxyvinyltransferase (426 aa).

Residue 22–23 (KN) coordinates phosphoenolpyruvate. Arg-94 lines the UDP-N-acetyl-alpha-D-glucosamine pocket. The active-site Proton donor is Cys-118. 2-(S-cysteinyl)pyruvic acid O-phosphothioketal is present on Cys-118. Residues 123–127 (RPVDL), Asp-310, and Ile-332 each bind UDP-N-acetyl-alpha-D-glucosamine.

This sequence belongs to the EPSP synthase family. MurA subfamily.

Its subcellular location is the cytoplasm. The enzyme catalyses phosphoenolpyruvate + UDP-N-acetyl-alpha-D-glucosamine = UDP-N-acetyl-3-O-(1-carboxyvinyl)-alpha-D-glucosamine + phosphate. Its pathway is cell wall biogenesis; peptidoglycan biosynthesis. Its function is as follows. Cell wall formation. Adds enolpyruvyl to UDP-N-acetylglucosamine. This chain is UDP-N-acetylglucosamine 1-carboxyvinyltransferase, found in Hyphomonas neptunium (strain ATCC 15444).